Consider the following 233-residue polypeptide: Probable RNA 2'-phosphotransferase (233 aa).

The protein belongs to the KptA/TPT1 family.

In terms of biological role, removes the 2'-phosphate from RNA via an intermediate in which the phosphate is ADP-ribosylated by NAD followed by a presumed transesterification to release the RNA and generate ADP-ribose 1''-2''-cyclic phosphate (APPR&gt;P). May function as an ADP-ribosylase. This Hyperthermus butylicus (strain DSM 5456 / JCM 9403 / PLM1-5) protein is Probable RNA 2'-phosphotransferase.